We begin with the raw amino-acid sequence, 347 residues long: GTPase Obg (347 aa).

The 158-residue stretch at 1-158 folds into the Obg domain; the sequence is MFIDNVKLVL…LSVRLELKLI (158 aa). The OBG-type G domain maps to 159–339; sequence ADVGLVGFPN…LKFMLLEEVK (181 aa). GTP-binding positions include 165-172, 190-194, 212-215, 280-283, and 320-322; these read GFPNVGKS, FTTLT, DIPG, SKSD, and SSL. Mg(2+)-binding residues include Ser172 and Thr192.

It belongs to the TRAFAC class OBG-HflX-like GTPase superfamily. OBG GTPase family. Monomer. Mg(2+) is required as a cofactor.

It is found in the cytoplasm. An essential GTPase which binds GTP, GDP and possibly (p)ppGpp with moderate affinity, with high nucleotide exchange rates and a fairly low GTP hydrolysis rate. Plays a role in control of the cell cycle, stress response, ribosome biogenesis and in those bacteria that undergo differentiation, in morphogenesis control. This Campylobacter lari (strain RM2100 / D67 / ATCC BAA-1060) protein is GTPase Obg.